A 304-amino-acid polypeptide reads, in one-letter code: Beta-lactamase AER-1 (304 aa).

The N-terminal stretch at 1–37 (MYVLSVEKPTLRNKFAAGIGVVLVCVVASFIPTPVFA) is a signal peptide. Ser-83 serves as the catalytic Acyl-ester intermediate. The cysteines at positions 90 and 137 are disulfide-linked. The segment at 173-195 (ETQLDRKEPELNEGTPGDVRDTT) is disordered. Substrate is bound at residue 248-250 (KTG).

Belongs to the class-A beta-lactamase family.

It carries out the reaction a beta-lactam + H2O = a substituted beta-amino acid. Its function is as follows. Hydrolyzes carbenicillin. Methicillin and oxacillin are weakly hydrolyzed. This is Beta-lactamase AER-1 (aer1) from Aeromonas hydrophila.